A 222-amino-acid chain; its full sequence is MALPNQQNVDLPTFKLLIVGDGGTGKTTFLKRHLTGEFEHNTEPTLGVDIYPLDFFTNRGKIRFECWDTAGQEKYSGLKDAYYIHGQCAIIMFDVTARHTYMNIDRWYRDLRRVCKNIPIVLCGNKVDVPSRQIKPKHVSYHRKKCLQYYEMSAKNNCNFEKPFLYLARRIAGDAKLSFVESPEAQIDNLDVESLQLLTVEAGTQPLLMTRISFEFNTLSIE.

Positions 10-174 constitute a Small GTPase Ran-type domain; sequence DLPTFKLLIV…LYLARRIAGD (165 aa). 21–28 is a binding site for GTP; it reads DGGTGKTT. Positions 40–48 are switch-I; it reads HNTEPTLGV. GTP-binding positions include glycine 71, 125-128, and 153-155; these read NKVD and SAK. Residues 71–87 are switch-II; it reads GQEKYSGLKDAYYIHGQ.

Belongs to the small GTPase superfamily. Ran family. In terms of assembly, found in a nuclear export complex with RanGTP, exportin and pre-miRNA.

Its subcellular location is the nucleus. GTP-binding protein involved in nucleocytoplasmic transport. Required for the import of protein into the nucleus and also for RNA export. Involved in chromatin condensation and control of cell cycle. In Arabidopsis thaliana (Mouse-ear cress), this protein is GTP-binding nuclear protein Ran-4 (RAN4).